A 96-amino-acid chain; its full sequence is UPF0251 protein Shal_3723 (96 aa).

This sequence belongs to the UPF0251 family.

In Shewanella halifaxensis (strain HAW-EB4), this protein is UPF0251 protein Shal_3723.